Reading from the N-terminus, the 478-residue chain is Calcium/calmodulin-dependent protein kinase type II subunit alpha (478 aa).

At Y13 the chain carries Phosphotyrosine. The Protein kinase domain maps to 13-271 (YQLFEELGKG…AAEALKHPWI (259 aa)). Residues 19–27 (LGKGAFSVV) and K42 contribute to the ATP site. D135 functions as the Proton acceptor in the catalytic mechanism. A Phosphoserine modification is found at S257. T286 is subject to Phosphothreonine; by autocatalysis. The tract at residues 290 to 300 (LKKFNARRKLK) is calmodulin-binding. The segment at 310–320 (TRNFSGGKSGG) is interaction with BAALC. The interval 314–341 (SGGKSGGNKKSDGVKESSESTNTTIEDE) is disordered. The span at 322 to 331 (KKSDGVKESS) shows a compositional bias: basic and acidic residues. A phosphoserine mark is found at S330, S331, and S333. T336 and T337 each carry phosphothreonine. S404 carries the phosphoserine modification.

This sequence belongs to the protein kinase superfamily. CAMK Ser/Thr protein kinase family. CaMK subfamily. As to quaternary structure, there are 4 genes encoding calcium/calmodulin-dependent protein kinase type II chains: CAMK2A, CAMK2B, CAMK2G and CAMK2D. The corresponding proteins assemble into homo- or heteromultimeric holoenzymes composed of 12 subunits with two hexameric rings stacked one on top of the other. Interacts with BAALC. Interacts with MPDZ. Interacts with SYN1. Interacts with CAMK2N2. Interacts with SYNGAP1. Interacts with SYNPO2. Interacts with SHANK3. Interacts with GRIN2B. Interacts with CACNB2. Interacts with LRRC7. Interacts with GRM5. Interacts with DAGLA (via C-terminal); this interaction is enhanced by autophosphorylation of CAMK2A at Thr-286. Interacts with CAMK2N1; this interaction requires CAMK2A activation by Ca(2+). The cofactor is Mg(2+). Post-translationally, autophosphorylation of Thr-286 following activation by Ca(2+)/calmodulin. Phosphorylation of Thr-286 locks the kinase into an activated state. Palmitoylated. Probably palmitoylated by ZDHHC3 and ZDHHC7.

It localises to the synapse. The protein localises to the postsynaptic density. Its subcellular location is the cell projection. It is found in the dendritic spine. The protein resides in the dendrite. It catalyses the reaction L-seryl-[protein] + ATP = O-phospho-L-seryl-[protein] + ADP + H(+). The enzyme catalyses L-threonyl-[protein] + ATP = O-phospho-L-threonyl-[protein] + ADP + H(+). Activated by Ca(2+)/calmodulin. Binding of calmodulin results in conformational change that relieves intrasteric autoinhibition and allows autophosphorylation of Thr-286 which turns the kinase in a constitutively active form and confers to the kinase a Ca(2+)-independent activity. Calcium/calmodulin-dependent protein kinase that functions autonomously after Ca(2+)/calmodulin-binding and autophosphorylation, and is involved in various processes, such as synaptic plasticity, neurotransmitter release and long-term potentiation. Member of the NMDAR signaling complex in excitatory synapses, it regulates NMDAR-dependent potentiation of the AMPAR and therefore excitatory synaptic transmission. Regulates dendritic spine development. Also regulates the migration of developing neurons. Phosphorylates the transcription factor FOXO3 to activate its transcriptional activity. Phosphorylates the transcription factor ETS1 in response to calcium signaling, thereby decreasing ETS1 affinity for DNA. In response to interferon-gamma (IFN-gamma) stimulation, catalyzes phosphorylation of STAT1, stimulating the JAK-STAT signaling pathway. In response to interferon-beta (IFN-beta) stimulation, stimulates the JAK-STAT signaling pathway. Acts as a negative regulator of 2-arachidonoylglycerol (2-AG)-mediated synaptic signaling via modulation of DAGLA activity. The sequence is that of Calcium/calmodulin-dependent protein kinase type II subunit alpha (CAMK2A) from Pongo abelii (Sumatran orangutan).